A 148-amino-acid polypeptide reads, in one-letter code: Protein Smg homolog (148 aa).

Belongs to the Smg family.

In Thiobacillus denitrificans (strain ATCC 25259 / T1), this protein is Protein Smg homolog.